A 197-amino-acid polypeptide reads, in one-letter code: Proteasome subunit beta 1 (197 aa).

A propeptide spans 1-6 (removed in mature form; by autocatalysis); sequence MNRKTG. Residue Thr-7 is the Nucleophile of the active site.

This sequence belongs to the peptidase T1B family. As to quaternary structure, the 20S proteasome core is composed of 14 alpha and 14 beta subunits that assemble into four stacked heptameric rings, resulting in a barrel-shaped structure. The two inner rings, each composed of seven catalytic beta subunits, are sandwiched by two outer rings, each composed of seven alpha subunits. The catalytic chamber with the active sites is on the inside of the barrel. Has a gated structure, the ends of the cylinder being occluded by the N-termini of the alpha-subunits. Is capped at one or both ends by the proteasome regulatory ATPase, PAN.

It is found in the cytoplasm. The catalysed reaction is Cleavage of peptide bonds with very broad specificity.. The formation of the proteasomal ATPase PAN-20S proteasome complex, via the docking of the C-termini of PAN into the intersubunit pockets in the alpha-rings, triggers opening of the gate for substrate entry. Interconversion between the open-gate and close-gate conformations leads to a dynamic regulation of the 20S proteasome proteolysis activity. Functionally, component of the proteasome core, a large protease complex with broad specificity involved in protein degradation. This Pyrococcus horikoshii (strain ATCC 700860 / DSM 12428 / JCM 9974 / NBRC 100139 / OT-3) protein is Proteasome subunit beta 1.